A 279-amino-acid polypeptide reads, in one-letter code: HTH-type transcriptional regulator HdfR (279 aa).

The HTH lysR-type domain occupies 1–58 (MDTELLKTFLEVSRTRHFGRAAESLYLTQSAVSFRIRQLENQLGVNLFTRHRNNIRLT). A DNA-binding region (H-T-H motif) is located at residues 18–37 (FGRAAESLYLTQSAVSFRIR).

It belongs to the LysR transcriptional regulatory family.

Negatively regulates the transcription of the flagellar master operon flhDC by binding to the upstream region of the operon. The chain is HTH-type transcriptional regulator HdfR from Escherichia coli (strain SE11).